A 102-amino-acid chain; its full sequence is UPF0235 protein Swol_0959 (102 aa).

Belongs to the UPF0235 family.

This chain is UPF0235 protein Swol_0959, found in Syntrophomonas wolfei subsp. wolfei (strain DSM 2245B / Goettingen).